A 194-amino-acid polypeptide reads, in one-letter code: A-type ATP synthase subunit E (194 aa).

The tract at residues 35–56 (DAEADADQIREEREAEVERTIE) is disordered. Residues 41–56 (DQIREEREAEVERTIE) show a composition bias toward basic and acidic residues.

The protein belongs to the V-ATPase E subunit family. As to quaternary structure, has multiple subunits with at least A(3), B(3), C, D, E, F, H, I and proteolipid K(x).

Its subcellular location is the cell membrane. Its function is as follows. Component of the A-type ATP synthase that produces ATP from ADP in the presence of a proton gradient across the membrane. The protein is A-type ATP synthase subunit E of Haloarcula marismortui (strain ATCC 43049 / DSM 3752 / JCM 8966 / VKM B-1809) (Halobacterium marismortui).